The primary structure comprises 480 residues: Glutamyl-tRNA(Gln) amidotransferase subunit A (480 aa).

Residues K76 and S151 each act as charge relay system in the active site. S175 functions as the Acyl-ester intermediate in the catalytic mechanism.

Belongs to the amidase family. GatA subfamily. In terms of assembly, heterotrimer of A, B and C subunits.

It catalyses the reaction L-glutamyl-tRNA(Gln) + L-glutamine + ATP + H2O = L-glutaminyl-tRNA(Gln) + L-glutamate + ADP + phosphate + H(+). Its function is as follows. Allows the formation of correctly charged Gln-tRNA(Gln) through the transamidation of misacylated Glu-tRNA(Gln) in organisms which lack glutaminyl-tRNA synthetase. The reaction takes place in the presence of glutamine and ATP through an activated gamma-phospho-Glu-tRNA(Gln). In Exiguobacterium sibiricum (strain DSM 17290 / CCUG 55495 / CIP 109462 / JCM 13490 / 255-15), this protein is Glutamyl-tRNA(Gln) amidotransferase subunit A.